Here is a 599-residue protein sequence, read N- to C-terminus: Aspartate--tRNA(Asp/Asn) ligase (599 aa).

Residue Glu-173 participates in L-aspartate binding. The tract at residues 197-200 (QLFK) is aspartate. An L-aspartate-binding site is contributed by Arg-219. ATP contacts are provided by residues 219 to 221 (RDE) and Gln-228. His-449 contacts L-aspartate. Glu-482 contributes to the ATP binding site. Residue Arg-489 participates in L-aspartate binding. 534–537 (GLDR) is a binding site for ATP.

It belongs to the class-II aminoacyl-tRNA synthetase family. Type 1 subfamily. As to quaternary structure, homodimer.

The protein localises to the cytoplasm. The enzyme catalyses tRNA(Asx) + L-aspartate + ATP = L-aspartyl-tRNA(Asx) + AMP + diphosphate. Its function is as follows. Aspartyl-tRNA synthetase with relaxed tRNA specificity since it is able to aspartylate not only its cognate tRNA(Asp) but also tRNA(Asn). Reaction proceeds in two steps: L-aspartate is first activated by ATP to form Asp-AMP and then transferred to the acceptor end of tRNA(Asp/Asn). The polypeptide is Aspartate--tRNA(Asp/Asn) ligase (Marinobacter nauticus (strain ATCC 700491 / DSM 11845 / VT8) (Marinobacter aquaeolei)).